A 477-amino-acid polypeptide reads, in one-letter code: Glutamate--tRNA ligase 2 (477 aa).

Positions 9–19 (PSPTGFLHIGG) match the 'HIGH' region motif. The 'KMSKS' region motif lies at 238 to 242 (KLSKR). Lysine 241 contributes to the ATP binding site.

It belongs to the class-I aminoacyl-tRNA synthetase family. Glutamate--tRNA ligase type 1 subfamily. Monomer.

The protein localises to the cytoplasm. The catalysed reaction is tRNA(Glu) + L-glutamate + ATP = L-glutamyl-tRNA(Glu) + AMP + diphosphate. Functionally, catalyzes the attachment of glutamate to tRNA(Glu) in a two-step reaction: glutamate is first activated by ATP to form Glu-AMP and then transferred to the acceptor end of tRNA(Glu). The polypeptide is Glutamate--tRNA ligase 2 (Paramagnetospirillum magneticum (strain ATCC 700264 / AMB-1) (Magnetospirillum magneticum)).